Consider the following 356-residue polypeptide: DNA polymerase IV (356 aa).

The 182-residue stretch at 7–188 (IIHIDMDAFY…IPVTKFYGVG (182 aa)) folds into the UmuC domain. The Mg(2+) site is built by aspartate 11 and aspartate 106. The active site involves glutamate 107.

This sequence belongs to the DNA polymerase type-Y family. As to quaternary structure, monomer. It depends on Mg(2+) as a cofactor.

The protein localises to the cytoplasm. The enzyme catalyses DNA(n) + a 2'-deoxyribonucleoside 5'-triphosphate = DNA(n+1) + diphosphate. In terms of biological role, poorly processive, error-prone DNA polymerase involved in untargeted mutagenesis. Copies undamaged DNA at stalled replication forks, which arise in vivo from mismatched or misaligned primer ends. These misaligned primers can be extended by PolIV. Exhibits no 3'-5' exonuclease (proofreading) activity. May be involved in translesional synthesis, in conjunction with the beta clamp from PolIII. This chain is DNA polymerase IV, found in Listeria monocytogenes serotype 4b (strain CLIP80459).